Reading from the N-terminus, the 658-residue chain is UvrABC system protein B (658 aa).

In terms of domain architecture, Helicase ATP-binding spans 26 to 413; it reads EGINSGKKKQ…SPEVIEQIIR (388 aa). 39 to 46 is an ATP binding site; sequence GATGTGKT. The Beta-hairpin signature appears at 92–115; it reads YYDYYQPEAYVPQTDTFIEKDAQI. The Helicase C-terminal domain occupies 430–596; the sequence is QIDDLLGEIQ…TIQKGVRDVI (167 aa). A UVR domain is found at 622 to 657; the sequence is EKTIAKMEAEMKEAAKALDFERAAELRDLLLELKAE.

The protein belongs to the UvrB family. As to quaternary structure, forms a heterotetramer with UvrA during the search for lesions. Interacts with UvrC in an incision complex.

It is found in the cytoplasm. Functionally, the UvrABC repair system catalyzes the recognition and processing of DNA lesions. A damage recognition complex composed of 2 UvrA and 2 UvrB subunits scans DNA for abnormalities. Upon binding of the UvrA(2)B(2) complex to a putative damaged site, the DNA wraps around one UvrB monomer. DNA wrap is dependent on ATP binding by UvrB and probably causes local melting of the DNA helix, facilitating insertion of UvrB beta-hairpin between the DNA strands. Then UvrB probes one DNA strand for the presence of a lesion. If a lesion is found the UvrA subunits dissociate and the UvrB-DNA preincision complex is formed. This complex is subsequently bound by UvrC and the second UvrB is released. If no lesion is found, the DNA wraps around the other UvrB subunit that will check the other stand for damage. This is UvrABC system protein B from Bacillus cereus (strain ZK / E33L).